Reading from the N-terminus, the 406-residue chain is Leu/Ile/Val-binding protein homolog 5 (406 aa).

The first 29 residues, 1-29, serve as a signal peptide directing secretion; sequence MIGTRLPAWTRVLACGVAGLSLMTISAKA.

This sequence belongs to the leucine-binding protein family.

In terms of biological role, component of an amino-acid transport system. In Brucella suis biovar 1 (strain 1330), this protein is Leu/Ile/Val-binding protein homolog 5.